We begin with the raw amino-acid sequence, 790 residues long: IQ motif and ubiquitin-like domain-containing protein (790 aa).

The segment covering 1-17 (MSNQPKKYETQNIANST) has biased composition (polar residues). The tract at residues 1–49 (MSNQPKKYETQNIANSTEESDAFDIVTIPVPSEEPQESDQTEEHESGIE) is disordered. In terms of domain architecture, Ubiquitin-like spans 130-206 (ATVKVVLIPV…IQVEIFSTNP (77 aa)). Residues 337–366 (RLKAVIVIQTYYRQWHAKIFVEDLRRQKSL) enclose the IQ domain.

In terms of assembly, component of the axonemal radial spoke 1 (RS1) complex, at least composed of spoke head proteins RSPH1, RSPH3, RSPH9 and the cilia-specific component RSPH4A or sperm-specific component RSPH6A, spoke stalk proteins RSPH14, DNAJB13, DYDC1, ROPN1L and NME5, and the anchor protein IQUB. Does not appear to be part of radial spoke complexes 2 or 3 (RS2 or RS3). Interacts with CALM1. Interacts with DNAJB13. Interacts with DYNLL2. Interacts with NME5. Interacts with RSPH3. Interacts with RSPH9. Interacts with ZMYND10. Interacts with calmodulin; the interaction occurs in conditions of low but not high calcium.

Its subcellular location is the cytoplasm. It localises to the cytoskeleton. It is found in the flagellum axoneme. The protein localises to the cell projection. The protein resides in the cilium. Its function is as follows. Adapter protein that anchors the radial spoke 1 (RS1) complex to the A microtubule of outer doublet microtubules in axonemes. The triple radial spokes (RS1, RS2 and RS3) are required to modulate beating of the sperm flagellum. May play a role in inhibiting signaling via MAPK1/ERK2 and MAPK3/ERK1. Additionally, may play a role in the functioning of cilia. Not required for the functioning of tracheal or ependymal cilia. In Macaca fascicularis (Crab-eating macaque), this protein is IQ motif and ubiquitin-like domain-containing protein (IQUB).